The following is an 86-amino-acid chain: Progonadoliberin-2 (86 aa).

An N-terminal signal peptide occupies residues 1 to 24 (MVSVCRLLLVAALLLCLQAQLSFS). At Gln-25 the chain carries Pyrrolidone carboxylic acid. Gly-34 carries the post-translational modification Glycine amide.

The protein belongs to the GnRH family.

It is found in the secreted. Functionally, stimulates the secretion of gonadotropins. The chain is Progonadoliberin-2 (gnrh2) from Clarias gariepinus (North African catfish).